The sequence spans 453 residues: Carbamoyl phosphate synthase arginine-specific small chain (453 aa).

A mitochondrion-targeting transit peptide spans 1-33 (MFSRLAARLPKASALNGVAARQVRNLSQPAITG). The interval 26-50 (LSQPAITGSKGRNMPAREPRTTAAA) is disordered. 3 residues coordinate L-glutamine: S97, G280, and G282. The Glutamine amidotransferase type-1 domain maps to 233–420 (HVALIDCGVK…MENVELFKSN (188 aa)). The Nucleophile role is filled by C309. L-glutamine-binding residues include L310, Q313, N351, G353, and Y354. Catalysis depends on residues H393 and E395.

It belongs to the CarA family. In terms of assembly, heterodimer composed of 2 chains; the small (or glutamine) chain promotes the hydrolysis of glutamine to ammonia, which is used by the large (or ammonia) chain to synthesize carbamoyl phosphate.

The protein localises to the mitochondrion matrix. It catalyses the reaction hydrogencarbonate + L-glutamine + 2 ATP + H2O = carbamoyl phosphate + L-glutamate + 2 ADP + phosphate + 2 H(+). The enzyme catalyses L-glutamine + H2O = L-glutamate + NH4(+). The protein operates within amino-acid biosynthesis; L-arginine biosynthesis; carbamoyl phosphate from bicarbonate: step 1/1. Its function is as follows. Small subunit of the arginine-specific carbamoyl phosphate synthase (CPSase). CPSase catalyzes the formation of carbamoyl phosphate from the ammonia moiety of glutamine, carbonate, and phosphate donated by ATP, the first step of the arginine biosynthetic pathway. The small subunit (glutamine amidotransferase) binds and cleaves glutamine to supply the large subunit with the substrate ammonia. The protein is Carbamoyl phosphate synthase arginine-specific small chain (arg-2) of Neurospora crassa (strain ATCC 24698 / 74-OR23-1A / CBS 708.71 / DSM 1257 / FGSC 987).